Here is a 150-residue protein sequence, read N- to C-terminus: D-aminoacyl-tRNA deacylase (150 aa).

The Gly-cisPro motif, important for rejection of L-amino acids signature appears at 138 to 139 (GP).

This sequence belongs to the DTD family. As to quaternary structure, homodimer.

Its subcellular location is the cytoplasm. The enzyme catalyses glycyl-tRNA(Ala) + H2O = tRNA(Ala) + glycine + H(+). It catalyses the reaction a D-aminoacyl-tRNA + H2O = a tRNA + a D-alpha-amino acid + H(+). An aminoacyl-tRNA editing enzyme that deacylates mischarged D-aminoacyl-tRNAs. Also deacylates mischarged glycyl-tRNA(Ala), protecting cells against glycine mischarging by AlaRS. Acts via tRNA-based rather than protein-based catalysis; rejects L-amino acids rather than detecting D-amino acids in the active site. By recycling D-aminoacyl-tRNA to D-amino acids and free tRNA molecules, this enzyme counteracts the toxicity associated with the formation of D-aminoacyl-tRNA entities in vivo and helps enforce protein L-homochirality. The sequence is that of D-aminoacyl-tRNA deacylase from Salinibacter ruber (strain DSM 13855 / M31).